We begin with the raw amino-acid sequence, 470 residues long: Aspartyl aminopeptidase (470 aa).

Position 92 (H92) interacts with Zn(2+). H166 serves as a coordination point for substrate. D263 serves as a coordination point for Zn(2+). Substrate is bound at residue E299. 2 residues coordinate Zn(2+): E300 and D343. 4 residues coordinate substrate: D343, H346, K371, and Y378. Zn(2+) is bound at residue H437.

It belongs to the peptidase M18 family. As to quaternary structure, tetrahedron-shaped homododecamer built from six homodimers. The cofactor is Zn(2+). In terms of tissue distribution, expressed in various cell types and tissues including the pharynx, neurons, body wall muscle, intestine and vulva.

It localises to the cytoplasm. Its subcellular location is the cytosol. It carries out the reaction Release of an N-terminal aspartate or glutamate from a peptide, with a preference for aspartate.. Aminopeptidase with specificity towards an acidic amino acid at the N-terminus. Plays a role in membrane trafficking and is specifically involved in the recycling and degradation of endocytic cargo. This chain is Aspartyl aminopeptidase, found in Caenorhabditis elegans.